The primary structure comprises 273 residues: Large ribosomal subunit protein uL2c (273 aa).

Disordered regions lie at residues 30–55 (EKKLTRGWSRAQGRNNKGRITTRHRG) and 222–243 (GSAMNPVDHPHGGGEGKAPIGR). Basic residues predominate over residues 45-55 (NKGRITTRHRG).

It belongs to the universal ribosomal protein uL2 family. As to quaternary structure, part of the 50S ribosomal subunit.

The protein localises to the plastid. The sequence is that of Large ribosomal subunit protein uL2c (rpl2) from Prototheca wickerhamii.